The primary structure comprises 65 residues: MAVAFYIPDQATLLREAEQKEQQILRLRESQWRFLATVVLETLRQYTSCHPKTGRKSGKYRKPSQ.

As to quaternary structure, interacts with Diap2 (via BIR2 domain).

Its function is as follows. Activator of apoptosis, as well as grim and hid, that acts on the effector Dredd. In Drosophila melanogaster (Fruit fly), this protein is Cell death protein rpr (rpr).